The following is a 358-amino-acid chain: Holliday junction branch migration complex subunit RuvB (358 aa).

The disordered stretch occupies residues 1-24; the sequence is MAIKRSHNSPPATEENLLTPNPTI. The span at 8-22 shows a compositional bias: polar residues; the sequence is NSPPATEENLLTPNP. The interval 13-195 is large ATPase domain (RuvB-L); the sequence is TEENLLTPNP…FGLIQRLRFY (183 aa). Residues Ile-34, Arg-35, Gly-76, Lys-79, Thr-80, Thr-81, 142–144, Arg-185, Tyr-195, and Arg-232 each bind ATP; that span reads EDY. Mg(2+) is bound at residue Thr-80. Positions 196 to 266 are small ATPAse domain (RuvB-S); sequence AVEELTAIIL…LAAEGLNQLN (71 aa). The interval 269-358 is head domain (RuvB-H); sequence SMGLDWTDRL…KDRSLPLFEF (90 aa). DNA-binding residues include Arg-324 and Arg-329.

The protein belongs to the RuvB family. Homohexamer. Forms an RuvA(8)-RuvB(12)-Holliday junction (HJ) complex. HJ DNA is sandwiched between 2 RuvA tetramers; dsDNA enters through RuvA and exits via RuvB. An RuvB hexamer assembles on each DNA strand where it exits the tetramer. Each RuvB hexamer is contacted by two RuvA subunits (via domain III) on 2 adjacent RuvB subunits; this complex drives branch migration. In the full resolvosome a probable DNA-RuvA(4)-RuvB(12)-RuvC(2) complex forms which resolves the HJ.

It is found in the cytoplasm. It catalyses the reaction ATP + H2O = ADP + phosphate + H(+). The RuvA-RuvB-RuvC complex processes Holliday junction (HJ) DNA during genetic recombination and DNA repair, while the RuvA-RuvB complex plays an important role in the rescue of blocked DNA replication forks via replication fork reversal (RFR). RuvA specifically binds to HJ cruciform DNA, conferring on it an open structure. The RuvB hexamer acts as an ATP-dependent pump, pulling dsDNA into and through the RuvAB complex. RuvB forms 2 homohexamers on either side of HJ DNA bound by 1 or 2 RuvA tetramers; 4 subunits per hexamer contact DNA at a time. Coordinated motions by a converter formed by DNA-disengaged RuvB subunits stimulates ATP hydrolysis and nucleotide exchange. Immobilization of the converter enables RuvB to convert the ATP-contained energy into a lever motion, pulling 2 nucleotides of DNA out of the RuvA tetramer per ATP hydrolyzed, thus driving DNA branch migration. The RuvB motors rotate together with the DNA substrate, which together with the progressing nucleotide cycle form the mechanistic basis for DNA recombination by continuous HJ branch migration. Branch migration allows RuvC to scan DNA until it finds its consensus sequence, where it cleaves and resolves cruciform DNA. This is Holliday junction branch migration complex subunit RuvB from Microcystis aeruginosa (strain NIES-843 / IAM M-2473).